Reading from the N-terminus, the 458-residue chain is BTB/POZ domain-containing protein At5g41330 (458 aa).

The region spanning 11–72 (NVVSINVGGR…LRTGNLPARS (62 aa)) is the BTB domain. 3 WD repeats span residues 259-305 (DSAI…MVWE), 360-399 (LNER…LVGN), and 421-458 (SGEN…GISI).

It functions in the pathway protein modification; protein ubiquitination. Functionally, may act as a substrate-specific adapter of an E3 ubiquitin-protein ligase complex (CUL3-RBX1-BTB) which mediates the ubiquitination and subsequent proteasomal degradation of target proteins. The protein is BTB/POZ domain-containing protein At5g41330 of Arabidopsis thaliana (Mouse-ear cress).